The primary structure comprises 739 residues: Phosphoribosylformylglycinamidine synthase subunit PurL (739 aa).

Residue H54 is part of the active site. Residues Y57 and K96 each coordinate ATP. E98 provides a ligand contact to Mg(2+). Substrate-binding positions include 99–102 and R121; that span reads SHNH. H100 serves as the catalytic Proton acceptor. Residue D122 participates in Mg(2+) binding. Q245 provides a ligand contact to substrate. D273 serves as a coordination point for Mg(2+). 317–319 provides a ligand contact to substrate; sequence ESQ. D500 and G537 together coordinate ATP. N538 lines the Mg(2+) pocket. Position 540 (S540) interacts with substrate.

The protein belongs to the FGAMS family. In terms of assembly, monomer. Part of the FGAM synthase complex composed of 1 PurL, 1 PurQ and 2 PurS subunits.

The protein resides in the cytoplasm. The enzyme catalyses N(2)-formyl-N(1)-(5-phospho-beta-D-ribosyl)glycinamide + L-glutamine + ATP + H2O = 2-formamido-N(1)-(5-O-phospho-beta-D-ribosyl)acetamidine + L-glutamate + ADP + phosphate + H(+). It functions in the pathway purine metabolism; IMP biosynthesis via de novo pathway; 5-amino-1-(5-phospho-D-ribosyl)imidazole from N(2)-formyl-N(1)-(5-phospho-D-ribosyl)glycinamide: step 1/2. Its function is as follows. Part of the phosphoribosylformylglycinamidine synthase complex involved in the purines biosynthetic pathway. Catalyzes the ATP-dependent conversion of formylglycinamide ribonucleotide (FGAR) and glutamine to yield formylglycinamidine ribonucleotide (FGAM) and glutamate. The FGAM synthase complex is composed of three subunits. PurQ produces an ammonia molecule by converting glutamine to glutamate. PurL transfers the ammonia molecule to FGAR to form FGAM in an ATP-dependent manner. PurS interacts with PurQ and PurL and is thought to assist in the transfer of the ammonia molecule from PurQ to PurL. In Bacillus cereus (strain G9842), this protein is Phosphoribosylformylglycinamidine synthase subunit PurL.